The following is a 197-amino-acid chain: NADH-quinone oxidoreductase subunit B (197 aa).

Residues Cys-76, Cys-77, Cys-141, and Cys-171 each coordinate [4Fe-4S] cluster.

The protein belongs to the complex I 20 kDa subunit family. As to quaternary structure, NDH-1 is composed of 14 different subunits. Subunits NuoB, C, D, E, F, and G constitute the peripheral sector of the complex. It depends on [4Fe-4S] cluster as a cofactor.

It localises to the cell inner membrane. It carries out the reaction a quinone + NADH + 5 H(+)(in) = a quinol + NAD(+) + 4 H(+)(out). NDH-1 shuttles electrons from NADH, via FMN and iron-sulfur (Fe-S) centers, to quinones in the respiratory chain. The immediate electron acceptor for the enzyme in this species is believed to be ubiquinone. Couples the redox reaction to proton translocation (for every two electrons transferred, four hydrogen ions are translocated across the cytoplasmic membrane), and thus conserves the redox energy in a proton gradient. This chain is NADH-quinone oxidoreductase subunit B, found in Methylobacterium nodulans (strain LMG 21967 / CNCM I-2342 / ORS 2060).